The chain runs to 93 residues: Cytochrome c (93 aa).

Residues 1–13 show a composition bias toward low complexity; that stretch reads AALPPGDAAAAQG. A disordered region spans residues 1 to 21; that stretch reads AALPPGDAAAAQGGSNGVGPN. Residue Met70 coordinates heme c.

This sequence belongs to the cytochrome c family. In terms of processing, binds 1 heme c group covalently per subunit.

Its subcellular location is the mitochondrion intermembrane space. Its function is as follows. Electron carrier protein. The oxidized form of the cytochrome c heme group can accept an electron from the heme group of the cytochrome c1 subunit of cytochrome reductase. Cytochrome c then transfers this electron to the cytochrome oxidase complex, the final protein carrier in the mitochondrial electron-transport chain. The polypeptide is Cytochrome c (Trypanosoma brucei brucei).